We begin with the raw amino-acid sequence, 326 residues long: Phosphotriesterase homology protein (326 aa).

His-22, His-24, Lys-145, His-178, His-207, and Asp-264 together coordinate Zn(2+). At Lys-145 the chain carries N6-carboxylysine.

This sequence belongs to the metallo-dependent hydrolases superfamily. Phosphotriesterase family. Requires Zn(2+) as cofactor.

This Mycobacterium tuberculosis (strain CDC 1551 / Oshkosh) protein is Phosphotriesterase homology protein (php).